The following is a 239-amino-acid chain: Peptidyl-tRNA hydrolase (239 aa).

Tyr14 lines the tRNA pocket. His19 serves as the catalytic Proton acceptor. Residues Phe64, Asn66, and Asn112 each contribute to the tRNA site. Residues 199–227 form a disordered region; it reads EKPAQKGRSHIRQARPKAPPAELPSSGPM. Residues 203–213 show a composition bias toward basic residues; it reads QKGRSHIRQAR.

It belongs to the PTH family. In terms of assembly, monomer.

It localises to the cytoplasm. It catalyses the reaction an N-acyl-L-alpha-aminoacyl-tRNA + H2O = an N-acyl-L-amino acid + a tRNA + H(+). Hydrolyzes ribosome-free peptidyl-tRNAs (with 1 or more amino acids incorporated), which drop off the ribosome during protein synthesis, or as a result of ribosome stalling. Its function is as follows. Catalyzes the release of premature peptidyl moieties from peptidyl-tRNA molecules trapped in stalled 50S ribosomal subunits, and thus maintains levels of free tRNAs and 50S ribosomes. This is Peptidyl-tRNA hydrolase from Chelativorans sp. (strain BNC1).